A 420-amino-acid polypeptide reads, in one-letter code: Type II methyltransferase M.NmeDI (420 aa).

The disordered stretch occupies residues 1–23 (MMSLKIQPAVPKKSDKPSATNRD). The SAM-dependent MTase C5-type domain occupies 56-411 (TLIFSFFSGA…MTLKSYLENH (356 aa)). The active site involves Cys148.

The protein belongs to the class I-like SAM-binding methyltransferase superfamily. C5-methyltransferase family.

It carries out the reaction a 2'-deoxycytidine in DNA + S-adenosyl-L-methionine = a 5-methyl-2'-deoxycytidine in DNA + S-adenosyl-L-homocysteine + H(+). In terms of biological role, a methylase that recognizes the double-stranded sequence 5'-RCCGGB-3', methylates C-2 on both strands, and protects the DNA from cleavage by the NmeDI endonuclease. The protein is Type II methyltransferase M.NmeDI (nmeDIMP) of Neisseria meningitidis serogroup C.